Here is a 363-residue protein sequence, read N- to C-terminus: MSLQHFIQNALSNWMRQEGPESDIVLSSRIRLARNLDKVRFPTLFSNEEASAIIALFEEQFTGYEVPGIGKFELVKMDQVQPLEKRVLVEKHLISPHLTEASFGACLLSENEEVSIMLNEEDHIRIQCLFPGFQLSEALKAANQVDDWIEDRIDYAFSEQRGYLTSCPTNVGTGLRASVMMHLPALVLTRQINRIIPAINQLGLVVRGIYGEGSEALGNIFQISNQITLGKSEHDIVEDLNSVVAQLIEQERSARKALYQTSQIELEDRVYRSYGVLSNCRMIESKETARCLSDVRLGIDLGIIKGLSSNILNELMILTQPGFLQQYSGGALRPNERDIRRAALIRERLKLENNGNRQEDETI.

Residues Ile24–Ala254 form the Phosphagen kinase C-terminal domain. ATP-binding positions include Ser27 to Arg31, His92, Arg125, Arg176 to Met180, and Arg207 to Glu212. Positions Arg337 to Ala342 match the RDXXRA motif of the pArg binding pocket involved in allosteric regulation motif.

Belongs to the ATP:guanido phosphotransferase family.

The catalysed reaction is L-arginyl-[protein] + ATP = N(omega)-phospho-L-arginyl-[protein] + ADP + H(+). Appears to be allosterically activated by the binding of pArg-containing polypeptides to the pArg-binding pocket localized in the C-terminal domain of McsB. Functionally, catalyzes the specific phosphorylation of arginine residues in a large number of proteins. Is part of the bacterial stress response system. Protein arginine phosphorylation has a physiologically important role and is involved in the regulation of many critical cellular processes, such as protein homeostasis, motility, competence, and stringent and stress responses, by regulating gene expression and protein activity. This Bacillus licheniformis (strain ATCC 14580 / DSM 13 / JCM 2505 / CCUG 7422 / NBRC 12200 / NCIMB 9375 / NCTC 10341 / NRRL NRS-1264 / Gibson 46) protein is Protein-arginine kinase.